The primary structure comprises 492 residues: 2,3-bisphosphoglycerate-independent phosphoglycerate mutase (492 aa).

Asp-11 and Ser-61 together coordinate Mn(2+). Residue Ser-61 is the Phosphoserine intermediate of the active site. Substrate is bound by residues His-118, 147 to 148 (RD), Arg-177, Arg-183, 248 to 251 (RSDR), and Lys-321. 5 residues coordinate Mn(2+): Asp-387, His-391, Asp-428, His-429, and His-446.

The protein belongs to the BPG-independent phosphoglycerate mutase family. In terms of assembly, monomer. The cofactor is Mn(2+).

It carries out the reaction (2R)-2-phosphoglycerate = (2R)-3-phosphoglycerate. It functions in the pathway carbohydrate degradation; glycolysis; pyruvate from D-glyceraldehyde 3-phosphate: step 3/5. In terms of biological role, catalyzes the interconversion of 2-phosphoglycerate and 3-phosphoglycerate. This Wolinella succinogenes (strain ATCC 29543 / DSM 1740 / CCUG 13145 / JCM 31913 / LMG 7466 / NCTC 11488 / FDC 602W) (Vibrio succinogenes) protein is 2,3-bisphosphoglycerate-independent phosphoglycerate mutase.